A 145-amino-acid polypeptide reads, in one-letter code: Large ribosomal subunit protein uL11m (145 aa).

Belongs to the universal ribosomal protein uL11 family.

It localises to the mitochondrion. This is Large ribosomal subunit protein uL11m (RPL11) from Reclinomonas americana.